Reading from the N-terminus, the 932-residue chain is von Willebrand factor A domain-containing protein DDB_G0292028 (932 aa).

The tract at residues 1–49 is disordered; the sequence is MNFIKKVIGGGSSKSKTDIKIEDEQHEQQHEQQHEKQQIPDKISTSKVN. Residues 15-39 are compositionally biased toward basic and acidic residues; the sequence is SKTDIKIEDEQHEQQHEQQHEKQQI. The 128-residue stretch at 95 to 222 folds into the VIT domain; the sequence is LTSPGLNTKV…DVTVNITITS (128 aa). A VWFA domain is found at 342–521; the sequence is EFIFVLDCSG…IAMQPTLSNI (180 aa). Disordered regions lie at residues 661–752 and 800–834; these read QQIN…SQAQ and TSQI…STSS. A compositionally biased stretch (polar residues) spans 677-686; sequence TRVQGSSSVF. A compositionally biased stretch (low complexity) spans 815–834; the sequence is SSSPTIQKSSSLPSRPSTSS.

This chain is von Willebrand factor A domain-containing protein DDB_G0292028, found in Dictyostelium discoideum (Social amoeba).